The chain runs to 883 residues: MPSLNEIRSTFLNYFGAADHAIVPSAPLVPQNDPTLLFVNAGMVPFKNVFTGAETPPHPRATSSQKCVRAGGKHNDLDNVGYTARHHTFFEMLGNFSFGDYFKEQAITHAWTLLTRDFALPKDKLLVTVYHTDTEAADLWKKIAGLSDDRIIRIATNDNFWSMGDTGPCGPCSEIFFDHGDHIPGGPPGSPDEDGDRFIEIWNLVFMQFEQMAGGERVSLPKPSIDTGMGLERIAAVMQGVHDNYDIDLFKALIAASVELTGVRAEGAQAPSHRVIADHLRSSSFLLADGVTPSNEGRGYVLRRIMRRAMRHAYLLGANEPLMHRLAPTLVAQMGQAYPELRRAEASIVETLRQEEERFRVTLGRGMGLLDEATAGLSAGGVLDGETAFKLYDTYGFPLDLTQDAVRARGITVDTDGFDVAMDRQRTMARANWAGSGQTGAAAAWFGIKEQSGPTNFVGYDTTETTGTVKAIVLDGAPVEAAQAGASVDVLLDRTSFYAESGGQAGDTGVIEAHGVESRVTDTQKQAGDLYVHRVELAGPLKVGDSVVASVDAARRTTTRANHSAAHLVHAALHHVLGPHVAQKGQMVDGDRMRFDFSHGGPLTADEIERIEAEVNAVIRQNVPAQTKEMAPQEAIEAGAVALFGEKYGDSVRVLTLGESLTETGKAYSVELCGGTHVARTGDIALFKIVSEQGVASGVRRIEALTGEAARRFLLDQAGVAKALADQFKTPVAEVLARVDALVAERKALERQLAEAKKQLALGGGSGGAASGPEDVAGTALIARVLDGVGGKELRGVAEEFKKQLTNGGVVALVGVTDGKAAVTVAVTADLTAKFSAADLAKAAVIAMGGQGAGGKADFAQGGAPDATKAQAGLDAIKAALAG.

His-563, His-567, Cys-673, and His-677 together coordinate Zn(2+).

It belongs to the class-II aminoacyl-tRNA synthetase family. It depends on Zn(2+) as a cofactor.

It localises to the cytoplasm. The catalysed reaction is tRNA(Ala) + L-alanine + ATP = L-alanyl-tRNA(Ala) + AMP + diphosphate. Functionally, catalyzes the attachment of alanine to tRNA(Ala) in a two-step reaction: alanine is first activated by ATP to form Ala-AMP and then transferred to the acceptor end of tRNA(Ala). Also edits incorrectly charged Ser-tRNA(Ala) and Gly-tRNA(Ala) via its editing domain. The chain is Alanine--tRNA ligase from Caulobacter sp. (strain K31).